A 261-amino-acid chain; its full sequence is Cytochrome c oxidase subunit 3 (261 aa).

Over 1–15 (MAHQAHAYHMVDPSP) the chain is Mitochondrial matrix. Residues 16–34 (WPLTGAVAALLMTSGLAVW) form a helical membrane-spanning segment. The Mitochondrial intermembrane segment spans residues 35-40 (FHFHSM). A helical transmembrane segment spans residues 41–66 (YLLYLGLTLLLLTMVQWWRDIIREGT). The Mitochondrial matrix portion of the chain corresponds to 67-72 (FQGHHT). A helical membrane pass occupies residues 73 to 105 (PPVQKGLRYGMILFITSEVFFFLGFFWAFYHSS). Over 106–128 (LAPTPELGGCWPPTGIYPLDPFE) the chain is Mitochondrial intermembrane. The chain crosses the membrane as a helical span at residues 129–152 (VPLLNTAVLLASGVTVTWAHHSLM). The Mitochondrial matrix portion of the chain corresponds to 153–155 (EGN). The chain crosses the membrane as a helical span at residues 156–183 (RKEAIQALTLTVLLGFYFTALQAMEYYE). Residues 184–190 (APFTIAD) lie on the Mitochondrial intermembrane side of the membrane. A helical membrane pass occupies residues 191 to 223 (GVYGSTFFVATGFHGLHVIIGSTFLMVCLLRQI). Topologically, residues 224-232 (QYHFTSEHH) are mitochondrial matrix. A helical membrane pass occupies residues 233–256 (FGFERAAWYWHFVDVVWLFLYVSI). Over 257–261 (YWWGS) the chain is Mitochondrial intermembrane.

This sequence belongs to the cytochrome c oxidase subunit 3 family. In terms of assembly, component of the cytochrome c oxidase (complex IV, CIV), a multisubunit enzyme composed of 14 subunits. The complex is composed of a catalytic core of 3 subunits MT-CO1, MT-CO2 and MT-CO3, encoded in the mitochondrial DNA, and 11 supernumerary subunits COX4I, COX5A, COX5B, COX6A, COX6B, COX6C, COX7A, COX7B, COX7C, COX8 and NDUFA4, which are encoded in the nuclear genome. The complex exists as a monomer or a dimer and forms supercomplexes (SCs) in the inner mitochondrial membrane with NADH-ubiquinone oxidoreductase (complex I, CI) and ubiquinol-cytochrome c oxidoreductase (cytochrome b-c1 complex, complex III, CIII), resulting in different assemblies (supercomplex SCI(1)III(2)IV(1) and megacomplex MCI(2)III(2)IV(2)).

It localises to the mitochondrion inner membrane. The catalysed reaction is 4 Fe(II)-[cytochrome c] + O2 + 8 H(+)(in) = 4 Fe(III)-[cytochrome c] + 2 H2O + 4 H(+)(out). Functionally, component of the cytochrome c oxidase, the last enzyme in the mitochondrial electron transport chain which drives oxidative phosphorylation. The respiratory chain contains 3 multisubunit complexes succinate dehydrogenase (complex II, CII), ubiquinol-cytochrome c oxidoreductase (cytochrome b-c1 complex, complex III, CIII) and cytochrome c oxidase (complex IV, CIV), that cooperate to transfer electrons derived from NADH and succinate to molecular oxygen, creating an electrochemical gradient over the inner membrane that drives transmembrane transport and the ATP synthase. Cytochrome c oxidase is the component of the respiratory chain that catalyzes the reduction of oxygen to water. Electrons originating from reduced cytochrome c in the intermembrane space (IMS) are transferred via the dinuclear copper A center (CU(A)) of subunit 2 and heme A of subunit 1 to the active site in subunit 1, a binuclear center (BNC) formed by heme A3 and copper B (CU(B)). The BNC reduces molecular oxygen to 2 water molecules using 4 electrons from cytochrome c in the IMS and 4 protons from the mitochondrial matrix. The sequence is that of Cytochrome c oxidase subunit 3 (MT-CO3) from Squalus acanthias (Spiny dogfish).